The sequence spans 4194 residues: Hybrid PKS-NRPS synthetase pydA (4194 aa).

Positions 14–450 (REPIAVVGSG…GTNAHAIVEN (437 aa)) constitute a Ketosynthase family 3 (KS3) domain. Catalysis depends on for beta-ketoacyl synthase activity residues C187, H326, and H370. The Malonyl-CoA:ACP transacylase (MAT) domain maps to 565-887 (VFTGQGAQWA…QRGKDDVQAF (323 aa)). The N-terminal hotdog fold stretch occupies residues 953 to 1088 (HPLLGTRTTD…GRVIVITGEA (136 aa)). In terms of domain architecture, PKS/mFAS DH spans 953-1257 (HPLLGTRTTD…VVSFSEPTAE (305 aa)). H985 serves as the catalytic Proton acceptor; for dehydratase activity. The segment at 1103–1257 (LVDIPEDRFY…VVSFSEPTAE (155 aa)) is C-terminal hotdog fold. The Proton donor; for dehydratase activity role is filled by D1163. The interval 1302 to 1596 (YMRQLASLFP…FSGVDSTTHE (295 aa)) is methyltransferase (cMeT) domain. The region spanning 2141–2314 (TYVFFGLTSD…AGSILHIGAV (174 aa)) is the Ketoreductase (KR) domain. Residues 2421-2505 (TTAEEALEIV…ELVEFAVENM (85 aa)) form the Carrier 1 domain. S2465 carries the O-(pantetheine 4'-phosphoryl)serine modification. The interval 2512–2583 (NMSDSLNAVP…ERDSSTASLE (72 aa)) is disordered. Positions 2526–2547 (APVIPASPPSGSVSSAPSSDPP) are enriched in low complexity. Over residues 2550-2565 (TAETSQHLSESSSKTS) the composition is skewed to polar residues. A compositionally biased stretch (basic and acidic residues) spans 2566 to 2577 (QPDEKQSEERDS). Positions 2591–3023 (EKVLPVSPGQ…QILKDVSLFT (433 aa)) are condensation. The interval 3056-3467 (ANPPQEIALR…RIEGDTQIKL (412 aa)) is adenylation. Residues 3580–3660 (TQLTEAESEL…AMAAVIQDLS (81 aa)) form the Carrier 2 domain. The residue at position 3620 (S3620) is an O-(pantetheine 4'-phosphoryl)serine. The region spanning 3701 to 3920 (ITGATGFLGK…VDLISVERAA (220 aa)) is the Thioester reductase (TE) domain. Disordered stretches follow at residues 4031–4110 (RRDK…DEQI) and 4163–4194 (KGEY…EPDD). Residues 4057-4072 (RGRDVSPRHPALDHPD) show a composition bias toward basic and acidic residues. Over residues 4174-4183 (EEAEEAEWQC) the composition is skewed to acidic residues. Over residues 4184–4194 (DEGHGDGEPDD) the composition is skewed to basic and acidic residues.

In the C-terminal section; belongs to the NRP synthetase family. The cofactor is pantetheine 4'-phosphate.

It functions in the pathway mycotoxin biosynthesis. Hybrid PKS-NRPS synthetase; part of the gene cluster that mediates the biosynthesis of pyrrocidines, fungal natural products containing a macrocyclic para-cyclophane connected to a decahydrofluorene ring system that show potent antibiotic activities toward Gram-negative bacteria. Within the pathway, the PKS-NRPS pydA, with the help of the trans-enoyl reductase pydC, synthesize the polyketide-tyrosyl acyl thioester product which can be reductively off-loaded by the terminal reductase (R) domain in pydA. The PKS module of pydA acts in combination with the trans-acting enoyl reductase pydC to produce a methylated polyketide attached to the ACP domain. In parallel, the adenylation (A) domain of the NRPS module activated L-tyrosine, which is then transferred to the ACP domain. The condensation (C) domain subsequently link this group to the polyketide chain, forming an enzyme-bound amide. The alpha/beta hydrolase pydG is then required to catalyze the subsequent Knoevenagel condensation that affords the 3-pyrrolin-2-one ring, whereas the four proteins pydB, pydE, pydX and pydZ then function synergistically to form the cyclophane. PydB and the membrane-bound pydX and pydZ are lipid-binding proteins that can sequester and mold the pdyG product into the inverse S-shape. Binding of the medium chain reductase pydE to the complex would trigger the cascade oxidative cyclization. PydY is involved in the Diels-Alder cycloaddition that forms the decahydrofluorene core. Additional non-enzymatic hydroxylation yields pyrrocidine A2 which can be further reduced into pyrrocidine B by an endogenous reductase. The sequence is that of Hybrid PKS-NRPS synthetase pydA from Acremonium sp.